Consider the following 866-residue polypeptide: Speckle targeted PIP5K1A-regulated poly(A) polymerase (866 aa).

A Matrin-type zinc finger spans residues phenylalanine 16–leucine 46. The region spanning arginine 56–glutamine 128 is the RRM domain. Positions leucine 116–histidine 147 are disordered. Serine 205 contacts ATP. The Mg(2+) site is built by aspartate 216 and aspartate 218. UTP-binding residues include aspartate 216 and aspartate 218. Disordered regions lie at residues leucine 223–alanine 249 and leucine 267–histidine 321. A compositionally biased stretch (polar residues) spans threonine 282–glutamine 304. Asparagine 393 contributes to the ATP binding site. Positions 393, 415, 433, and 550 each coordinate UTP. The 59-residue stretch at leucine 492 to histidine 550 folds into the PAP-associated domain. The tract at residues serine 599–lysine 866 is KA1; binds the bulging loops of U6 snRNA but is dispensable for terminal uridylyltransferase activity. Disordered stretches follow at residues glutamine 638 to glutamate 687, glutamate 728 to valine 755, and arginine 773 to alanine 792. A compositionally biased stretch (basic and acidic residues) spans lysine 669–glutamate 687. Phosphoserine is present on residues serine 686 and serine 741.

It belongs to the DNA polymerase type-B-like family. Associates with the cleavage and polyadenylation specificity factor (CPSF) complex. Interacts with CPSF1 and CPSF3; the interaction is direct. Interacts with PIP5K1A. The cofactor is Mg(2+). Mn(2+) serves as cofactor. Post-translationally, phosphorylated by CK1 in the proline-rich (Pro-rich) region.

The protein localises to the nucleus. Its subcellular location is the nucleolus. It localises to the nucleus speckle. The catalysed reaction is RNA(n) + UTP = RNA(n)-3'-uridine ribonucleotide + diphosphate. It carries out the reaction RNA(n) + ATP = RNA(n)-3'-adenine ribonucleotide + diphosphate. With respect to regulation, adenylyltransferase activity is specifically phosphatidylinositol 4,5-bisphosphate (PtdIns(4,5)P2). Poly(A) polymerase that creates the 3'-poly(A) tail of specific pre-mRNAs. Localizes to nuclear speckles together with PIP5K1A and mediates polyadenylation of a select set of mRNAs, such as HMOX1. In addition to polyadenylation, it is also required for the 3'-end cleavage of pre-mRNAs: binds to the 3'UTR of targeted pre-mRNAs and promotes the recruitment and assembly of the CPSF complex on the 3'UTR of pre-mRNAs. In addition to adenylyltransferase activity, also has uridylyltransferase activity. However, the ATP ratio is higher than UTP in cells, suggesting that it functions primarily as a poly(A) polymerase. Acts as a specific terminal uridylyltransferase for U6 snRNA in vitro: responsible for a controlled elongation reaction that results in the restoration of the four 3'-terminal UMP-residues found in newly transcribed U6 snRNA. Not involved in replication-dependent histone mRNA degradation. The chain is Speckle targeted PIP5K1A-regulated poly(A) polymerase (Tut1) from Rattus norvegicus (Rat).